A 567-amino-acid chain; its full sequence is Arginine--tRNA ligase (567 aa).

The short motif at 128–138 (ANPTGPLHVGH) is the 'HIGH' region element.

It belongs to the class-I aminoacyl-tRNA synthetase family. As to quaternary structure, monomer.

The protein resides in the cytoplasm. It catalyses the reaction tRNA(Arg) + L-arginine + ATP = L-arginyl-tRNA(Arg) + AMP + diphosphate. The polypeptide is Arginine--tRNA ligase (Acidovorax ebreus (strain TPSY) (Diaphorobacter sp. (strain TPSY))).